Reading from the N-terminus, the 432-residue chain is Protein RETICULATA, chloroplastic (432 aa).

Residues 1-47 constitute a chloroplast transit peptide; the sequence is MAGCAMNLQFSSVVKVRNEISSFGICNRDFVFRDLAKAMKVPVLRIR. Residues 109–140 are disordered; that stretch reads GNVGDGFNGSDGNGGGGGGGNGGEGDGEGEDY. The span at 111–132 shows a compositional bias: gly residues; the sequence is VGDGFNGSDGNGGGGGGGNGGE. Transmembrane regions (helical) follow at residues 249–269 and 322–342; these read LYVADLLVGTVVNIALVGMLA and IMYGAVGFGCGIVGQGIANLI.

The protein belongs to the RETICULATA family. In terms of tissue distribution, highly expressed in the vasculature of developing leaf primordia, margins of fully expanded leaves, hydathodes of rosette of cauline leaves, basal region of the lamina, stipules, root tips, stamens and in the abscission zone of the funiculus.

It is found in the plastid. Its subcellular location is the chloroplast membrane. May play a role in leaf development. Required for leaf mesophyll cell division in the early stages of leaf organogenesis. Acts in a developmental pathway that involves PPT1/CUE1 but does not include ASE2/DOV1. The sequence is that of Protein RETICULATA, chloroplastic from Arabidopsis thaliana (Mouse-ear cress).